Reading from the N-terminus, the 65-residue chain is Large ribosomal subunit protein uL29 (65 aa).

It belongs to the universal ribosomal protein uL29 family.

This chain is Large ribosomal subunit protein uL29, found in Natranaerobius thermophilus (strain ATCC BAA-1301 / DSM 18059 / JW/NM-WN-LF).